Here is a 561-residue protein sequence, read N- to C-terminus: MDDVRSVLLIAALSNAVKHKSVPAAGAVMGAILGTHPELRSKAGEIKGLLGSVLEEVSSLSAEDREEKLKTIAPDQYASLFEKKEKKKIGLPDLPKAEGGVVMRFAPNPSGPLHLGHARAAFLNDEYIRRYGGKYILRIEDTDPKRVDPDAYDMVREDIAWMGLSIAETIFQSDRFSKYYEVGKELIQKGHAYVCRCDNEKFKDLKMHKTACPCRSQSPEEALDLFDQMLDGAFTEGEVGVRLKTDLSHPDPAMRDYPLFRVLTSTPHQRVDAIVYPLMNLSVAVDDHLLGMTHVIRGKDHIANTKRQEFIFRYMGWETPVYRHYGRMGIEGVVLSTSQMRAGIQSGEYSGWDDVRLGTLRAMARRGIQPQAVRNAVVEIGIGETDIQFSWENLYAKNKEIIDSQADRFFFVPDPVLVPVSGSDPVVAKAMRYPGDESRGYREIPFAGSLYLPKAELESGAAYIRLKDLFNIKVLYEGDIIRGEYAGDDLQEARSKKAPIIQWLPENHANPCTLKTPDGDVSGVCEPEAVTTQDRIVQFERVGFARIDAAGNPAVAYFTHR.

A 'HIGH' region motif is present at residues 107–117 (PNPSGPLHLGH).

This sequence belongs to the class-I aminoacyl-tRNA synthetase family. Glutamate--tRNA ligase type 2 subfamily.

Its subcellular location is the cytoplasm. It carries out the reaction tRNA(Glu) + L-glutamate + ATP = L-glutamyl-tRNA(Glu) + AMP + diphosphate. Functionally, catalyzes the attachment of glutamate to tRNA(Glu) in a two-step reaction: glutamate is first activated by ATP to form Glu-AMP and then transferred to the acceptor end of tRNA(Glu). The sequence is that of Glutamate--tRNA ligase from Methanospirillum hungatei JF-1 (strain ATCC 27890 / DSM 864 / NBRC 100397 / JF-1).